Here is a 306-residue protein sequence, read N- to C-terminus: NAD kinase 1 (306 aa).

D67 acts as the Proton acceptor in catalysis. NAD(+)-binding positions include 67–68 (DG), 149–150 (NE), D181, and 192–197 (TGYTVS).

The protein belongs to the NAD kinase family. A divalent metal cation serves as cofactor.

The protein localises to the cytoplasm. The catalysed reaction is NAD(+) + ATP = ADP + NADP(+) + H(+). Involved in the regulation of the intracellular balance of NAD and NADP, and is a key enzyme in the biosynthesis of NADP. Catalyzes specifically the phosphorylation on 2'-hydroxyl of the adenosine moiety of NAD to yield NADP. The polypeptide is NAD kinase 1 (Trichormus variabilis (strain ATCC 29413 / PCC 7937) (Anabaena variabilis)).